The sequence spans 500 residues: Plasma protease C1 inhibitor (500 aa).

Positions 1–22 are cleaved as a signal peptide; the sequence is MASRLTLLTLLLLLLAGDRASS. Residues 20-31 are compositionally biased toward low complexity; the sequence is ASSNPNATSSSS. The segment at 20-43 is disordered; it reads ASSNPNATSSSSQDPESLQDRGEG. Asn25 carries N-linked (GlcNAc...) (complex) asparagine glycosylation. Thr47 and Thr48 each carry an O-linked (GalNAc...) threonine glycan. O-linked (GalNAc...) serine glycosylation occurs at Ser64. The disordered stretch occupies residues 65 to 118; sequence LPTTNSTTNSATKITANTTDEPTTQPTTEPTTQPTIQPTQPTTQLPTDSPTQPT. The span at 67–118 shows a compositional bias: low complexity; it reads TTNSTTNSATKITANTTDEPTTQPTTEPTTQPTIQPTQPTTQLPTDSPTQPT. Asn69 carries an N-linked (GlcNAc...) asparagine glycan. Residue Thr71 is glycosylated (O-linked (GalNAc...) threonine). Asn81 carries an N-linked (GlcNAc...) asparagine glycan. O-linked (GalNAc...) threonine glycans are attached at residues Thr83, Thr88, Thr92, and Thr96. 7 tandem repeats follow at residues 85 to 88, 89 to 92, 93 to 96, 97 to 100, 101 to 104, 105 to 108, and 116 to 119. Residues 85 to 119 are 7 X 4 AA tandem repeats of [QE]-P-T-[TQ]; sequence EPTTQPTTEPTTQPTIQPTQPTTQLPTDSPTQPTT. Disulfide bonds link Cys123–Cys428 and Cys130–Cys205. Asn238 and Asn253 each carry an N-linked (GlcNAc...) (complex) asparagine glycan. N-linked (GlcNAc...) asparagine; in variant TA glycosylation occurs at Asn272. N-linked (GlcNAc...) (complex) asparagine glycosylation occurs at Asn352.

It belongs to the serpin family. In terms of assembly, interacts with MASP1. As to quaternary structure, (Microbial infection) Binds to E.coli stcE which allows localization of SERPING1 to cell membranes thus protecting the bacteria against complement-mediated lysis. In terms of processing, highly glycosylated (49%) with N- and O-glycosylation. O-glycosylated with core 1 or possibly core 8 glycans. N-glycan heterogeneity at Asn-25: Hex5HexNAc4 (minor), dHex1Hex5HexNAc4 (minor), Hex6HexNAc5 (major) and dHex1Hex6HexNAc5 (minor). Cleaved by C1S in vitro. Post-translationally, (Microbial infection) Can be proteolytically cleaved by E.coli stcE.

It localises to the secreted. Its function is as follows. Serine protease inhibitor, which acrs as a regulator of the classical complement pathway. Forms a proteolytically inactive stoichiometric complex with the C1r or C1s proteases. May also regulate blood coagulation, fibrinolysis and the generation of kinins. Very efficient inhibitor of FXIIa. Inhibits chymotrypsin and kallikrein. The chain is Plasma protease C1 inhibitor (SERPING1) from Homo sapiens (Human).